Reading from the N-terminus, the 655-residue chain is DNA-directed RNA polymerase III subunit rpc3 (655 aa).

3 disordered regions span residues 153–183 (VKAN…SNEQ), 270–305 (KRKY…EENE), and 402–445 (RLDL…SSGG). A compositionally biased stretch (basic and acidic residues) spans 276 to 287 (RRADEPNKKPRT). Residues 291-305 (SVDEIDEQDEEEENE) are compositionally biased toward acidic residues. The span at 405-417 (LSSSTGPMDTSQP) shows a compositional bias: polar residues. Residues 418–427 (DGRRGKRPLE) show a composition bias toward basic and acidic residues. The leucine-zipper stretch occupies residues 582–603 (TYKAMSRCLQRLRFERSRIKDF).

It belongs to the RNA polymerase beta chain family. In terms of assembly, component of the RNA polymerase III (Pol III) complex consisting of 17 subunits.

It is found in the nucleus. In terms of biological role, DNA-dependent RNA polymerase catalyzes the transcription of DNA into RNA using the four ribonucleoside triphosphates as substrates. Specific core component of RNA polymerase III which synthesizes small RNAs, such as 5S rRNA and tRNAs. This is DNA-directed RNA polymerase III subunit rpc3 (rpc82) from Neosartorya fischeri (strain ATCC 1020 / DSM 3700 / CBS 544.65 / FGSC A1164 / JCM 1740 / NRRL 181 / WB 181) (Aspergillus fischerianus).